We begin with the raw amino-acid sequence, 478 residues long: 2,5-dioxopentanoate dehydrogenase (478 aa).

Residues 148–149 (WN), 172–175 (KPAT), and 225–226 (GS) contribute to the NADP(+) site. Glu-249 serves as the catalytic Proton acceptor. Cys-283 serves as the catalytic Nucleophile. Glu-379 serves as a coordination point for NADP(+).

Belongs to the aldehyde dehydrogenase family. Homotetramer.

It carries out the reaction 2,5-dioxopentanoate + NADP(+) + H2O = 2-oxoglutarate + NADPH + 2 H(+). In terms of biological role, 2,5-dioxopentanoate dehydrogenase involved in the degradation of pentoses such as D-arabinose or D-xylose, a major component of hemicelluloses such as xylan. Catalyzes the fifth reaction in the pentose utilization pathway through dehydratation of 2,5-dioxopentanoate into 2-oxoglutarate. Also shows dehydrogenase activity toward glycolaldehyde and DL-glyceraldehyde. This Saccharolobus solfataricus (strain ATCC 35092 / DSM 1617 / JCM 11322 / P2) (Sulfolobus solfataricus) protein is 2,5-dioxopentanoate dehydrogenase.